A 291-amino-acid polypeptide reads, in one-letter code: Syntaxin-1A homolog (291 aa).

Residues 1 to 24 (MTKDRLSALKAAQSEDEQDDDMHM) are disordered. The Cytoplasmic segment spans residues 1-266 (MTKDRLSALK…QYQSKARRKK (266 aa)). The stretch at 69 to 95 (NDQKTKEELDELMAVIKRAANKVRGKL) forms a coiled coil. The region spanning 193–255 (LADIEARHND…DRAVADTKKA (63 aa)) is the t-SNARE coiled-coil homology domain. The helical; Anchor for type IV membrane protein transmembrane segment at 267-287 (ICILVTGVILITGLIIFILFY) threads the bilayer. At 288–291 (AKVL) the chain is on the extracellular side.

It belongs to the syntaxin family. Interacts (via N-terminus, in open or in closed conformation) with unc-18; the interaction is direct. Interaction in open conformation with unc-18 promotes synaptic vesicle docking and tethering. Interaction via N-terminus with unc-18 mediates the secretion of the neurotransmitter acetylcholine from cholinergic motor neurons. Interaction with unc-18 is reduced in the presence of unc-13. In terms of tissue distribution, expressed throughout the head ganglion, nerve ring, ventral cord, dorsal cord, intestine, vulva and spermatheca.

It is found in the cell membrane. The protein resides in the cell projection. It localises to the axon. Its subcellular location is the dendrite. The protein localises to the perikaryon. Plays a critical role in several secretory processes, including cuticle secretion and neurotransmitter release, and probably assists in neuronal membrane maturation or the final stages of neuronal differentiation. Plays a role in synaptic vesicle docking and tethering through its association with unc-18. Through binding to unc-18 mediates the release of the neurotransmitter acetylcholine from cholinergic motor neurons, and thereby promotes locomotory behaviors. Essential for embryonic viability and development. Has a role in dauer formation and adult life span. Required for locomotion. Probably by regulating neuronal transmission downstream of lin-3 and receptor lin-23 and phospholipase plc-3 and upstream of innexin unc-7 and egl-4/PKG in ALA neurons, involved in the decrease in pharyngeal pumping during the quiescent state that precedes each larval molt. This Caenorhabditis elegans protein is Syntaxin-1A homolog.